The primary structure comprises 246 residues: Probable transcriptional regulatory protein HSM_1763 (246 aa).

The protein belongs to the TACO1 family.

It localises to the cytoplasm. The sequence is that of Probable transcriptional regulatory protein HSM_1763 from Histophilus somni (strain 2336) (Haemophilus somnus).